Reading from the N-terminus, the 244-residue chain is Octanoyltransferase (244 aa).

A BPL/LPL catalytic domain is found at 49–237 (VAPGNFLIFC…HLTALFELHI (189 aa)). Residues 94–101 (RGGDITYH), 167–169 (AMG), and 180–182 (GFA) each bind substrate. Cys-198 (acyl-thioester intermediate) is an active-site residue.

It belongs to the LipB family.

The protein resides in the cytoplasm. The catalysed reaction is octanoyl-[ACP] + L-lysyl-[protein] = N(6)-octanoyl-L-lysyl-[protein] + holo-[ACP] + H(+). The protein operates within protein modification; protein lipoylation via endogenous pathway; protein N(6)-(lipoyl)lysine from octanoyl-[acyl-carrier-protein]: step 1/2. Its function is as follows. Catalyzes the transfer of endogenously produced octanoic acid from octanoyl-acyl-carrier-protein onto the lipoyl domains of lipoate-dependent enzymes. Lipoyl-ACP can also act as a substrate although octanoyl-ACP is likely to be the physiological substrate. This Cytophaga hutchinsonii (strain ATCC 33406 / DSM 1761 / CIP 103989 / NBRC 15051 / NCIMB 9469 / D465) protein is Octanoyltransferase.